Reading from the N-terminus, the 132-residue chain is Small ribosomal subunit protein uS8 (132 aa).

Belongs to the universal ribosomal protein uS8 family. As to quaternary structure, part of the 30S ribosomal subunit. Contacts proteins S5 and S12.

One of the primary rRNA binding proteins, it binds directly to 16S rRNA central domain where it helps coordinate assembly of the platform of the 30S subunit. This is Small ribosomal subunit protein uS8 from Streptococcus pneumoniae serotype 19F (strain G54).